A 377-amino-acid polypeptide reads, in one-letter code: DNA replication and repair protein RecF (377 aa).

Residue 30–37 coordinates ATP; it reads GNNGSGKS.

Belongs to the RecF family.

It localises to the cytoplasm. In terms of biological role, the RecF protein is involved in DNA metabolism; it is required for DNA replication and normal SOS inducibility. RecF binds preferentially to single-stranded, linear DNA. It also seems to bind ATP. This is DNA replication and repair protein RecF from Colwellia psychrerythraea (strain 34H / ATCC BAA-681) (Vibrio psychroerythus).